Consider the following 217-residue polypeptide: Small ribosomal subunit protein uS3 (217 aa).

Residues 38–106 form the KH type-2 domain; it reads IRKYIEQRLA…RVHINIIEIK (69 aa).

Belongs to the universal ribosomal protein uS3 family. Part of the 30S ribosomal subunit. Forms a tight complex with proteins S10 and S14.

Its function is as follows. Binds the lower part of the 30S subunit head. Binds mRNA in the 70S ribosome, positioning it for translation. The protein is Small ribosomal subunit protein uS3 of Lactiplantibacillus plantarum (strain ATCC BAA-793 / NCIMB 8826 / WCFS1) (Lactobacillus plantarum).